The primary structure comprises 429 residues: MNNFKNLRGTVDLLPDQLIKWQNVEKIIIQQLFRSSVKEIRTPILEMTELFMRGIGEGTDVVSKEMYTFLDRGERSCTLRPEGTASVARALIQHGISTRPSQKLWYMGPMFRYERPQAGRQRQFHQLGVEFIGYESVNSDIEIITLAWDILQKLGIKELNLEINTLGDHIDRSNFQKAFLKWLEVNKNSLDLDSQRRIDKNPLRILDTKNVQTKQILKGAPRLFDFLSEKSLERYLIIKEKLKLLKIPFIENFNLVRGLDYYTHTAFEITTGTLGSQATVCGGGRYDSLISQMGGAETPAIGFAIGLERLIILCGSELEETRETDIYIVNKGIHAEILAMELSRKLRNYDLVVELDLSGASFSKQFKKANKLKSKSIIVIGDDEAVKNEFVIRLFNNDNSVNKEETISIEDNMKLEKWIKSNLILDKNL.

Belongs to the class-II aminoacyl-tRNA synthetase family. In terms of assembly, homodimer.

The protein localises to the cytoplasm. The catalysed reaction is tRNA(His) + L-histidine + ATP = L-histidyl-tRNA(His) + AMP + diphosphate + H(+). In Prochlorococcus marinus subsp. pastoris (strain CCMP1986 / NIES-2087 / MED4), this protein is Histidine--tRNA ligase.